A 355-amino-acid polypeptide reads, in one-letter code: UDP-N-acetylglucosamine--N-acetylmuramyl-(pentapeptide) pyrophosphoryl-undecaprenol N-acetylglucosamine transferase (355 aa).

UDP-N-acetyl-alpha-D-glucosamine-binding positions include 15 to 17 (TGG), N127, R163, S191, I244, 263 to 268 (ALTVSE), and Q288.

This sequence belongs to the glycosyltransferase 28 family. MurG subfamily.

The protein resides in the cell inner membrane. The catalysed reaction is di-trans,octa-cis-undecaprenyl diphospho-N-acetyl-alpha-D-muramoyl-L-alanyl-D-glutamyl-meso-2,6-diaminopimeloyl-D-alanyl-D-alanine + UDP-N-acetyl-alpha-D-glucosamine = di-trans,octa-cis-undecaprenyl diphospho-[N-acetyl-alpha-D-glucosaminyl-(1-&gt;4)]-N-acetyl-alpha-D-muramoyl-L-alanyl-D-glutamyl-meso-2,6-diaminopimeloyl-D-alanyl-D-alanine + UDP + H(+). Its pathway is cell wall biogenesis; peptidoglycan biosynthesis. Functionally, cell wall formation. Catalyzes the transfer of a GlcNAc subunit on undecaprenyl-pyrophosphoryl-MurNAc-pentapeptide (lipid intermediate I) to form undecaprenyl-pyrophosphoryl-MurNAc-(pentapeptide)GlcNAc (lipid intermediate II). The polypeptide is UDP-N-acetylglucosamine--N-acetylmuramyl-(pentapeptide) pyrophosphoryl-undecaprenol N-acetylglucosamine transferase (Escherichia coli O127:H6 (strain E2348/69 / EPEC)).